We begin with the raw amino-acid sequence, 480 residues long: tRNA-2-methylthio-N(6)-dimethylallyladenosine synthase (480 aa).

An MTTase N-terminal domain is found at 29 to 145 (GSFWIQTFGC…LEALLTQVDN (117 aa)). [4Fe-4S] cluster contacts are provided by C38, C74, C108, C180, C184, and C187. One can recognise a Radical SAM core domain in the interval 166–403 (RDSTICAWVN…NALVERIALQ (238 aa)). The region spanning 406 to 474 (SRYSGKVEQV…AFSLSGTPCE (69 aa)) is the TRAM domain.

It belongs to the methylthiotransferase family. MiaB subfamily. Monomer. [4Fe-4S] cluster serves as cofactor.

It localises to the cytoplasm. The catalysed reaction is N(6)-dimethylallyladenosine(37) in tRNA + (sulfur carrier)-SH + AH2 + 2 S-adenosyl-L-methionine = 2-methylsulfanyl-N(6)-dimethylallyladenosine(37) in tRNA + (sulfur carrier)-H + 5'-deoxyadenosine + L-methionine + A + S-adenosyl-L-homocysteine + 2 H(+). In terms of biological role, catalyzes the methylthiolation of N6-(dimethylallyl)adenosine (i(6)A), leading to the formation of 2-methylthio-N6-(dimethylallyl)adenosine (ms(2)i(6)A) at position 37 in tRNAs that read codons beginning with uridine. The protein is tRNA-2-methylthio-N(6)-dimethylallyladenosine synthase of Prochlorococcus marinus (strain MIT 9313).